We begin with the raw amino-acid sequence, 806 residues long: Exonuclease 1 (806 aa).

The tract at residues 1–99 (MGIQGLLQFI…KSRRERRQAN (99 aa)) is N-domain. The Mg(2+) site is built by D30, D78, E150, D152, D171, D173, and D225. The interval 138 to 229 (RTRGVDCVVA…ILSGCDYLQS (92 aa)) is I-domain. 3 disordered regions span residues 337-426 (RIDD…EDTS), 443-475 (HCPETQPTTKPLTNDNKVSKENHCGSTSGPFRP), and 512-754 (ETQE…SPGL). Over residues 355–378 (RSSSWNDRCDKTATTQASIWSQNY) the composition is skewed to polar residues. Residues 412 to 425 (PQRESQVKRPREDT) show a composition bias toward basic and acidic residues. Composition is skewed to polar residues over residues 447-458 (TQPTTKPLTNDN), 533-542 (SQSGGDTSSL), and 578-589 (WSGTTKELNKSV). Residues 592–601 (PARDSTERQR) are compositionally biased toward basic and acidic residues. Over residues 602-615 (SSSTPSGLSTLQQF) the composition is skewed to polar residues. The segment covering 651-670 (SQDSAYFSQSSSISASVENS) has biased composition (low complexity). A compositionally biased stretch (basic and acidic residues) spans 676–685 (NSDKEKERDS). Positions 686 to 696 (VVSNSPSSSPL) are enriched in low complexity. The span at 744 to 754 (KNVNNENSPGL) shows a compositional bias: polar residues.

Belongs to the XPG/RAD2 endonuclease family. EXO1 subfamily. Requires Mg(2+) as cofactor.

Its subcellular location is the nucleus. Its function is as follows. 5'-&gt;3' double-stranded DNA exonuclease which may also contain a cryptic 3'-&gt;5' double-stranded DNA exonuclease activity. Also exhibits endonuclease activity against 5'-overhanging flap structures similar to those generated by displacement synthesis when DNA polymerase encounters the 5'-end of a downstream Okazaki fragment. Required for DNA mismatch repair (MMR). The chain is Exonuclease 1 (exo1) from Danio rerio (Zebrafish).